Reading from the N-terminus, the 553-residue chain is Arginine--tRNA ligase (553 aa).

The short motif at 123 to 133 (ANPTGPLTIGR) is the 'HIGH' region element.

The protein belongs to the class-I aminoacyl-tRNA synthetase family. As to quaternary structure, monomer.

It is found in the cytoplasm. The catalysed reaction is tRNA(Arg) + L-arginine + ATP = L-arginyl-tRNA(Arg) + AMP + diphosphate. This chain is Arginine--tRNA ligase, found in Chlorobium phaeobacteroides (strain BS1).